Here is a 595-residue protein sequence, read N- to C-terminus: Isoprene synthase, chloroplastic (595 aa).

A chloroplast-targeting transit peptide spans 1 to 37 (MATELLCLHRPISLTHKLFRNPLPKVIQATPLTLKLR). D345 serves as a coordination point for dimethylallyl diphosphate. D345 and D349 together coordinate Mg(2+). A DDXXD motif motif is present at residues 345 to 349 (DDIYD). The dimethylallyl diphosphate site is built by E423, R486, and N489. Residues N489, S493, and E497 each coordinate Mg(2+).

It belongs to the terpene synthase family. Tpsb subfamily. Mg(2+) is required as a cofactor. As to expression, predominantly expressed in leaves.

Its subcellular location is the plastid. It is found in the chloroplast. It carries out the reaction dimethylallyl diphosphate = isoprene + diphosphate. The protein operates within terpene metabolism. Functionally, lyase that catalyzes the formation of isoprene from dimethylallyl diphosphate, but not from isopentenyl diphosphate or geranyl diphosphate. In Populus alba (White poplar), this protein is Isoprene synthase, chloroplastic.